The following is a 637-amino-acid chain: Phospholipase B (637 aa).

Positions 1 to 19 (MSIITTAFALSLLATTAFA) are cleaved as a signal peptide. The 527-residue stretch at 46–572 (DCPSNVTWIR…DTWCWAGDDN (527 aa)) folds into the PLA2c domain. Residues Asn50, Asn56, Asn122, Asn231, Asn246, Asn272, Asn314, Asn343, Asn387, Asn433, Asn481, Asn501, Asn528, Asn553, Asn572, Asn594, and Asn606 are each glycosylated (N-linked (GlcNAc...) asparagine).

Belongs to the lysophospholipase family. Post-translationally, N-glycosylated.

It localises to the secreted. The enzyme catalyses a 1-acyl-sn-glycero-3-phosphocholine + H2O = sn-glycerol 3-phosphocholine + a fatty acid + H(+). Functionally, exhibits phospholipase B (PLB), lysophospholipase (LPL) and lysophospholipase/transacylase (LPTA) activities. This Cryptococcus neoformans var. neoformans serotype D (strain B-3501A) (Filobasidiella neoformans) protein is Phospholipase B (PLB1).